The following is a 443-amino-acid chain: C4-dicarboxylate transport protein (443 aa).

Helical transmembrane passes span 17 to 37 (PFYSHLYVQVLAAIAAGILLG), 57 to 77 (LVKMIIAPVIFLTVATGIAGM), 92 to 112 (LYFLTFSTLALVIGMVVANVV), 139 to 159 (EQSIVGFLTNIIPTTIVGAFA), 161 to 181 (GDILQVLFFSVLFGIALAMVG), 201 to 221 (LVAILMKAAPIGAFGAMAFTI), 234 to 254 (MLIGTFYLTSLLFVLVVLGAV), 320 to 340 (IYMTLAALFIAQATGINLSWG), and 368 to 388 (AATLSVVPSVPVAGMALILGI).

It belongs to the dicarboxylate/amino acid:cation symporter (DAACS) (TC 2.A.23) family.

It is found in the cell inner membrane. Responsible for the transport of dicarboxylates such as succinate, fumarate, and malate from the periplasm across the membrane. The chain is C4-dicarboxylate transport protein from Rhizobium leguminosarum bv. trifolii (strain WSM2304).